Consider the following 186-residue polypeptide: Photosystem I assembly protein Ycf4 (186 aa).

A run of 2 helical transmembrane segments spans residues 22–42 and 57–77; these read FCWA…GTSS and IIFF…LFIS.

It belongs to the Ycf4 family.

It localises to the plastid. It is found in the chloroplast thylakoid membrane. Seems to be required for the assembly of the photosystem I complex. In Dioscorea elephantipes (Elephant's foot yam), this protein is Photosystem I assembly protein Ycf4.